A 520-amino-acid polypeptide reads, in one-letter code: GMP synthase [glutamine-hydrolyzing] (520 aa).

Residues 9 to 202 (KILILDFGSQ…VRQICGCTGQ (194 aa)) form the Glutamine amidotransferase type-1 domain. Cysteine 86 serves as the catalytic Nucleophile. Active-site residues include histidine 176 and glutamate 178. The region spanning 203 to 395 (WTPGQIIEDA…LGLPHPMVYR (193 aa)) is the GMPS ATP-PPase domain. 230–236 (SGGVDSS) lines the ATP pocket.

As to quaternary structure, homodimer.

It catalyses the reaction XMP + L-glutamine + ATP + H2O = GMP + L-glutamate + AMP + diphosphate + 2 H(+). Its pathway is purine metabolism; GMP biosynthesis; GMP from XMP (L-Gln route): step 1/1. In terms of biological role, catalyzes the synthesis of GMP from XMP. The chain is GMP synthase [glutamine-hydrolyzing] from Syntrophotalea carbinolica (strain DSM 2380 / NBRC 103641 / GraBd1) (Pelobacter carbinolicus).